The sequence spans 1519 residues: Putative lipoprotein YghJ (1519 aa).

The N-terminal stretch at 1-23 (MNKKFKYKKSLLAAILSATLLAG) is a signal peptide. 2 disordered regions span residues 22–107 (AGCD…GATC) and 226–247 (NAAT…TTPG). C24 carries N-palmitoyl cysteine lipidation. C24 carries the S-diacylglycerol cysteine lipid modification. Over residues 31-42 (SSSDTPPVDSGT) the composition is skewed to low complexity. Positions 51 to 77 (DPTPNPEPTPEPTPDPEPTPEPIPDPE) are enriched in pro residues. Over residues 97 to 107 (GGSQRVTGATC) the composition is skewed to polar residues. Residues 234–247 (STHTSPVVPVTTPG) show a composition bias toward low complexity. The region spanning 1080–1380 (GNMQSTGLWA…MYAQLKEWAE (301 aa)) is the Peptidase M60 domain. Residues 1497-1519 (DLPKPEQGPETINQVTEHKMSAE) are disordered.

This sequence to V.cholerae AcfD (VC_0845).

It localises to the cell membrane. In terms of biological role, may be a substrate of the type II secretion system beta (T2SS-beta). This Escherichia coli O78:H11 (strain H10407 / ETEC) protein is Putative lipoprotein YghJ (yghJ).